The chain runs to 349 residues: Deoxyguanosinetriphosphate triphosphohydrolase-like protein (349 aa).

An HD domain is found at 80–197 (RLTHTLEVAQ…VKYSDKIAYV (118 aa)).

Belongs to the dGTPase family. Type 2 subfamily.

The chain is Deoxyguanosinetriphosphate triphosphohydrolase-like protein from Clostridium tetani (strain Massachusetts / E88).